A 453-amino-acid polypeptide reads, in one-letter code: MATTLLQTSSSTFGGSSTRGGSLLAGGGGFGGGSLYGGGGSRTISASSARFVSSGSAGGYGGGFGGGAGSGYGGGFGGGFGGGFGSGFGDFGGGDGGLLSGNEKITMQNLNDRLASYLEKVRALEEANADLEVKIRDWYQRQSPTSPERDYSPYFKTTDELRDKILAAAIDNSRVILEIDNARLAADDFRLKYENEMALRQSVEADINGLRRVLDELTLTKTDLEMQIESLNEELAYLKKNHEEEMKEFSNQLAGQVNVEMDAAPGVDLTRVLSEMREQYEAMAEKNRRDAEAWFFSKTEELNKEVASNTEMIQTSKSEITDLRRTIQGLEIELQSQLSMKAGLESTLAETDGRYAAQLQQIQGLISSIEAQLSELRSEMEAQNQEYKMLLDIKTRLEQEIATYHSLLEGQDARMAGIGTGEASLGGGGGGKVRINVEESVDGKVVSSRKREI.

The segment at 1 to 102 (MATTLLQTSS…GGDGGLLSGN (102 aa)) is head. Phosphoserine is present on residues serine 16, serine 17, serine 34, serine 48, and serine 56. Residues 103–138 (EKITMQNLNDRLASYLEKVRALEEANADLEVKIRDW) form a coil 1A region. The IF rod domain maps to 103–415 (EKITMQNLND…SLLEGQDARM (313 aa)). Residues 139-157 (YQRQSPTSPERDYSPYFKT) form a linker 1 region. Residues 158-249 (TDELRDKILA…KNHEEEMKEF (92 aa)) form a coil 1B region. The tract at residues 250–269 (SNQLAGQVNVEMDAAPGVDL) is linker 12. The segment at 270-411 (TRVLSEMREQ…ATYHSLLEGQ (142 aa)) is coil 2. Residue lysine 298 forms a Glycyl lysine isopeptide (Lys-Gly) (interchain with G-Cter in SUMO2) linkage. Phosphothreonine is present on residues threonine 299 and threonine 321. The tail stretch occupies residues 412-453 (DARMAGIGTGEASLGGGGGGKVRINVEESVDGKVVSSRKREI). Lysine 444 is covalently cross-linked (Glycyl lysine isopeptide (Lys-Gly) (interchain with G-Cter in SUMO1); alternate). A Glycyl lysine isopeptide (Lys-Gly) (interchain with G-Cter in SUMO2); alternate cross-link involves residue lysine 444.

Belongs to the intermediate filament family. Heterotetramer of two type I and two type II keratins. Interacts with NOD2. Expressed in the basal cell layers of several stratified epithelia including esophagus, tongue, stomach, epidermis and hair follicle. In the hair follicle, expression is detected mainly in the basal layer of the outer root sheath (ORS), except just above the follicle bulb where it occurs throughout its thickness. Low expression levels are seen in the single layer of ORS cells around the base of the follicle which increases in the palisade-like cells of the bulb. Also expressed in the basal cells of the sebaceous glands, and expression in the epidermis occurs in a punctate pattern.

In Ovis aries (Sheep), this protein is Keratin, type I cytoskeletal 15.